The primary structure comprises 291 residues: NAD kinase (291 aa).

The active-site Proton acceptor is the aspartate 55. Residues aspartate 55–glycine 56, arginine 60, asparagine 130–glutamate 131, aspartate 160, and threonine 171–serine 176 contribute to the NAD(+) site.

Belongs to the NAD kinase family. Requires a divalent metal cation as cofactor.

Its subcellular location is the cytoplasm. It catalyses the reaction NAD(+) + ATP = ADP + NADP(+) + H(+). Functionally, involved in the regulation of the intracellular balance of NAD and NADP, and is a key enzyme in the biosynthesis of NADP. Catalyzes specifically the phosphorylation on 2'-hydroxyl of the adenosine moiety of NAD to yield NADP. This chain is NAD kinase, found in Corynebacterium glutamicum (strain ATCC 13032 / DSM 20300 / JCM 1318 / BCRC 11384 / CCUG 27702 / LMG 3730 / NBRC 12168 / NCIMB 10025 / NRRL B-2784 / 534).